The sequence spans 451 residues: Serine--tRNA ligase (451 aa).

Thr-258–Glu-260 contributes to the L-serine binding site. Arg-289–Glu-291 contacts ATP. Glu-312 lines the L-serine pocket. Position 376-379 (Glu-376–Ser-379) interacts with ATP. Residue Ser-411 coordinates L-serine.

It belongs to the class-II aminoacyl-tRNA synthetase family. Type-1 seryl-tRNA synthetase subfamily. As to quaternary structure, homodimer. The tRNA molecule binds across the dimer.

The protein resides in the cytoplasm. It carries out the reaction tRNA(Ser) + L-serine + ATP = L-seryl-tRNA(Ser) + AMP + diphosphate + H(+). The enzyme catalyses tRNA(Sec) + L-serine + ATP = L-seryl-tRNA(Sec) + AMP + diphosphate + H(+). Its pathway is aminoacyl-tRNA biosynthesis; selenocysteinyl-tRNA(Sec) biosynthesis; L-seryl-tRNA(Sec) from L-serine and tRNA(Sec): step 1/1. Catalyzes the attachment of serine to tRNA(Ser). Is also able to aminoacylate tRNA(Sec) with serine, to form the misacylated tRNA L-seryl-tRNA(Sec), which will be further converted into selenocysteinyl-tRNA(Sec). The chain is Serine--tRNA ligase from Bordetella pertussis (strain Tohama I / ATCC BAA-589 / NCTC 13251).